The following is a 529-amino-acid chain: Ribonuclease Y (529 aa).

A helical transmembrane segment spans residues 4–24; sequence GLIYISLEVLVACLITALVMY. Residues 216–297 form the KH domain; sequence LTTRIALPCS…NRIEEVYHRV (82 aa). In terms of domain architecture, HD spans 342–435; it reads ALQHSKEVAL…VCAADALSAG (94 aa).

Belongs to the RNase Y family.

It localises to the cell membrane. Endoribonuclease that initiates mRNA decay. The sequence is that of Ribonuclease Y from Helicobacter pylori (strain ATCC 700392 / 26695) (Campylobacter pylori).